The following is a 338-amino-acid chain: MTVATSASTAVPSDSRQRVATFLKDLQDQICQGLEAADGGAQFQEDTWQRPEGGGGRSRVMKNGQLLEQGGVNFSEVWGEQLPPSILAQRPEAAGYGFYATGTSMVLHPRNPYVPTVHLNYRYFEAGPVWWFGGGADLTPYYPFAEDAKHFHQVHQAACDRHHREYYPVFKRWCDEYFYLKHRGETRGVGGIFFDYQDGSDRELYRGPNPDGEAARYSQRVGSIGSRSWEDLFAFIQSCGQAFLEAYLPIVERRRHLTYGDRERQFQLYRRGRYVEFNLVYDRGTIFGLQTNGRTESILMSLPPLVRWEYGYTPEPNSREAELYSTFLKPQDWVNWPV.

Substrate is bound at residue S104. Residues H108 and H118 each contribute to the a divalent metal cation site. The active-site Proton donor is H118. N120–R122 provides a ligand contact to substrate. A divalent metal cation contacts are provided by H152 and H182. Residues Y274–E309 form an important for dimerization region.

This sequence belongs to the aerobic coproporphyrinogen-III oxidase family. As to quaternary structure, homodimer. Requires a divalent metal cation as cofactor.

It localises to the cytoplasm. It carries out the reaction coproporphyrinogen III + O2 + 2 H(+) = protoporphyrinogen IX + 2 CO2 + 2 H2O. It participates in porphyrin-containing compound metabolism; protoporphyrin-IX biosynthesis; protoporphyrinogen-IX from coproporphyrinogen-III (O2 route): step 1/1. Its function is as follows. Involved in the heme and chlorophyll biosynthesis. Catalyzes the aerobic oxidative decarboxylation of propionate groups of rings A and B of coproporphyrinogen-III to yield the vinyl groups in protoporphyrinogen-IX. The sequence is that of Oxygen-dependent coproporphyrinogen-III oxidase from Thermosynechococcus vestitus (strain NIES-2133 / IAM M-273 / BP-1).